Reading from the N-terminus, the 483-residue chain is Proline--tRNA ligase (483 aa).

Belongs to the class-II aminoacyl-tRNA synthetase family. ProS type 3 subfamily. In terms of assembly, homodimer.

Its subcellular location is the cytoplasm. It catalyses the reaction tRNA(Pro) + L-proline + ATP = L-prolyl-tRNA(Pro) + AMP + diphosphate. Its function is as follows. Catalyzes the attachment of proline to tRNA(Pro) in a two-step reaction: proline is first activated by ATP to form Pro-AMP and then transferred to the acceptor end of tRNA(Pro). The sequence is that of Proline--tRNA ligase from Sulfurisphaera tokodaii (strain DSM 16993 / JCM 10545 / NBRC 100140 / 7) (Sulfolobus tokodaii).